The chain runs to 304 residues: Coenzyme PQQ synthesis protein B (304 aa).

The protein belongs to the PqqB family.

It participates in cofactor biosynthesis; pyrroloquinoline quinone biosynthesis. Functionally, may be involved in the transport of PQQ or its precursor to the periplasm. This is Coenzyme PQQ synthesis protein B from Pseudomonas aeruginosa (strain UCBPP-PA14).